A 233-amino-acid polypeptide reads, in one-letter code: Ras-related protein Rab-20 (233 aa).

5 residues coordinate GTP: Gly17, Lys18, Thr19, Asp32, and Thr36. Thr19 serves as a coordination point for Mg(2+). 2 consecutive short sequence motifs (switch) follow at residues 28 to 41 (RRFP…GGAF) and 55 to 72 (DTAG…YCRG). Mg(2+) is bound by residues Thr36 and Asp55. The GTP site is built by Gly58, Asn113, Lys114, and Asp116. The span at 119-130 (SERDTEGGEKEG) shows a compositional bias: basic and acidic residues. The disordered stretch occupies residues 119–138 (SERDTEGGEKEGPASGKVGS). GTP contacts are provided by Ala183 and Lys184. 2 S-geranylgeranyl cysteine lipidation sites follow: Cys231 and Cys232.

It belongs to the small GTPase superfamily. Rab family. It depends on Mg(2+) as a cofactor. Present in a variety of tissues, but not in brain.

The protein resides in the cytoplasmic vesicle. It localises to the phagosome. Its subcellular location is the phagosome membrane. It is found in the golgi apparatus. The enzyme catalyses GTP + H2O = GDP + phosphate + H(+). Regulated by guanine nucleotide exchange factors (GEFs) which promote the exchange of bound GDP for free GTP. Regulated by GTPase activating proteins (GAPs) which increase the GTP hydrolysis activity. Inhibited by GDP dissociation inhibitors (GDIs). Plays a role in apical endocytosis/recycling. Plays a role in the maturation and acidification of phagosomes that engulf pathogens, such as S.aureus and Mycobacterium. Plays a role in the fusion of phagosomes with lysosomes. This is Ras-related protein Rab-20 from Mus musculus (Mouse).